The sequence spans 200 residues: Small ribosomal subunit protein uS4c (200 aa).

The 64-residue stretch at 91–154 folds into the S4 RNA-binding domain; the sequence is MRLDNVVFRL…NSRKMVTEAN (64 aa).

The protein belongs to the universal ribosomal protein uS4 family. In terms of assembly, part of the 30S ribosomal subunit. Contacts protein S5. The interaction surface between S4 and S5 is involved in control of translational fidelity.

The protein localises to the plastid. The protein resides in the chloroplast. Functionally, one of the primary rRNA binding proteins, it binds directly to 16S rRNA where it nucleates assembly of the body of the 30S subunit. In terms of biological role, with S5 and S12 plays an important role in translational accuracy. This Oltmannsiellopsis viridis (Marine flagellate) protein is Small ribosomal subunit protein uS4c (rps4).